The following is a 199-amino-acid chain: Inner membrane protein E199L (199 aa).

N131 is a glycosylation site (N-linked (GlcNAc...) asparagine; by host). The helical transmembrane segment at 150 to 170 threads the bilayer; the sequence is INVMNHPFLTLILIILILVII.

The protein belongs to the asfivirus E199L family. In terms of assembly, interacts with host PYCR2; this interaction results in autophagy activation. Contains intramolecular disulfide bonds.

It localises to the virion membrane. It is found in the host membrane. Functionally, essential for viral fusion with host endosomal membrane and core release. Not required for virus morphogenesis and egress. Induces complete autophagy through the interaction with and down-regulation of host PYCR2. The chain is Inner membrane protein E199L from African swine fever virus (isolate Tick/Malawi/Lil 20-1/1983) (ASFV).